Here is a 400-residue protein sequence, read N- to C-terminus: Small ribosomal subunit protein bS1 (400 aa).

S1 motif domains lie at 17–87 (GDVV…VTYL), 107–173 (EEVV…LSRR), 194–262 (GDVV…LSLK), and 279–348 (GDVV…LSIK). The segment covering 351-366 (EERPAQEEGQKEEKRA) has biased composition (basic and acidic residues). Residues 351-400 (EERPAQEEGQKEEKRAARPRRPRRQEKRDFELPETQTGFSMADLFGDIEL) form a disordered region.

This sequence belongs to the bacterial ribosomal protein bS1 family. In terms of processing, phosphorylated.

Binds mRNA; thus facilitating recognition of the initiation point. It is needed to translate mRNA with a short Shine-Dalgarno (SD) purine-rich sequence. The protein is Small ribosomal subunit protein bS1 (rpsA) of Streptococcus pneumoniae (strain ATCC BAA-255 / R6).